Here is a 234-residue protein sequence, read N- to C-terminus: Probable ascorbate-specific transmembrane electron transporter 1 (234 aa).

At 1-9 (MGLGVRAAP) the chain is on the cytoplasmic side. A helical transmembrane segment spans residues 10 to 30 (FTYVAHALAVAAATMVLVWCI). One can recognise a Cytochrome b561 domain in the interval 13–217 (VAHALAVAAA…FGASVVVAAV (205 aa)). At 31 to 48 (HFRGGLAFEATNKNLIFN) the chain is on the extracellular side. Residues 49–69 (VHPVLMLIGYIILGSEAIMVY) form a helical membrane-spanning segment. Histidine 50 is a binding site for heme b. 65–73 (AIMVYKVLP) contacts L-ascorbate. At 70–82 (KVLPTWKHDTTKL) the chain is on the cytoplasmic side. A helical transmembrane segment spans residues 83 to 103 (IHLILHAIALVFGAVGIYCAF). Heme b contacts are provided by histidine 84 and histidine 118. The Extracellular portion of the chain corresponds to 104-121 (KFHNESGIANLYSLHSWL). Position 114–123 (114–123 (LYSLHSWLGI)) interacts with monodehydro-L-ascorbate radical. Residues 122-142 (GIGTICLYGIQWIFGFVAFFF) form a helical membrane-spanning segment. At 143–151 (PRASPSVRK) the chain is on the cytoplasmic side. The helical transmembrane segment at 152–172 (GVLPWHILFGLFVYILALATA) threads the bilayer. Histidine 157 is a binding site for heme b. At 173 to 194 (ELGFLEKLTFLQSSGLDKYGAE) the chain is on the extracellular side. The helical transmembrane segment at 195–215 (AFLVNFTALIVVLFGASVVVA) threads the bilayer. Residues 216–234 (AVSPARVEEPHEYAPIPES) lie on the Cytoplasmic side of the membrane.

It depends on heme b as a cofactor.

Its subcellular location is the membrane. Two-heme-containing cytochrome. Catalyzes ascorbate-dependent trans-membrane electron transfer by utilizing a concerted H(+)/e(-) transfer mechanism. The chain is Probable ascorbate-specific transmembrane electron transporter 1 from Oryza sativa subsp. japonica (Rice).